The chain runs to 329 residues: Fructose-1,6-bisphosphatase class 1 (329 aa).

Residues Glu84, Asp103, Leu105, and Asp106 each coordinate Mg(2+). Substrate contacts are provided by residues 106-109 (DGSS), Asn196, and Lys262. Glu268 serves as a coordination point for Mg(2+).

Belongs to the FBPase class 1 family. Homotetramer. Requires Mg(2+) as cofactor.

It is found in the cytoplasm. The catalysed reaction is beta-D-fructose 1,6-bisphosphate + H2O = beta-D-fructose 6-phosphate + phosphate. Its pathway is carbohydrate biosynthesis; gluconeogenesis. The protein is Fructose-1,6-bisphosphatase class 1 of Shewanella woodyi (strain ATCC 51908 / MS32).